A 335-amino-acid chain; its full sequence is Holliday junction branch migration complex subunit RuvB (335 aa).

The segment at 4–184 (ADRLIQPTAL…FGIVQRLEFY (181 aa)) is large ATPase domain (RuvB-L). ATP-binding positions include Ile-23, Arg-24, Gly-65, Lys-68, Thr-69, Thr-70, 131–133 (EDY), Arg-174, Tyr-184, and Arg-221. Position 69 (Thr-69) interacts with Mg(2+). A small ATPAse domain (RuvB-S) region spans residues 185–255 (NIKDLTQIVK…VASAALDMLD (71 aa)). Residues 258–335 (KEGFDYMDRK…LHFGYDYEPN (78 aa)) form a head domain (RuvB-H) region. DNA contacts are provided by Arg-294, Arg-313, and Arg-318.

It belongs to the RuvB family. Homohexamer. Forms an RuvA(8)-RuvB(12)-Holliday junction (HJ) complex. HJ DNA is sandwiched between 2 RuvA tetramers; dsDNA enters through RuvA and exits via RuvB. An RuvB hexamer assembles on each DNA strand where it exits the tetramer. Each RuvB hexamer is contacted by two RuvA subunits (via domain III) on 2 adjacent RuvB subunits; this complex drives branch migration. In the full resolvosome a probable DNA-RuvA(4)-RuvB(12)-RuvC(2) complex forms which resolves the HJ.

It is found in the cytoplasm. The catalysed reaction is ATP + H2O = ADP + phosphate + H(+). In terms of biological role, the RuvA-RuvB-RuvC complex processes Holliday junction (HJ) DNA during genetic recombination and DNA repair, while the RuvA-RuvB complex plays an important role in the rescue of blocked DNA replication forks via replication fork reversal (RFR). RuvA specifically binds to HJ cruciform DNA, conferring on it an open structure. The RuvB hexamer acts as an ATP-dependent pump, pulling dsDNA into and through the RuvAB complex. RuvB forms 2 homohexamers on either side of HJ DNA bound by 1 or 2 RuvA tetramers; 4 subunits per hexamer contact DNA at a time. Coordinated motions by a converter formed by DNA-disengaged RuvB subunits stimulates ATP hydrolysis and nucleotide exchange. Immobilization of the converter enables RuvB to convert the ATP-contained energy into a lever motion, pulling 2 nucleotides of DNA out of the RuvA tetramer per ATP hydrolyzed, thus driving DNA branch migration. The RuvB motors rotate together with the DNA substrate, which together with the progressing nucleotide cycle form the mechanistic basis for DNA recombination by continuous HJ branch migration. Branch migration allows RuvC to scan DNA until it finds its consensus sequence, where it cleaves and resolves cruciform DNA. This chain is Holliday junction branch migration complex subunit RuvB, found in Pseudoalteromonas atlantica (strain T6c / ATCC BAA-1087).